Reading from the N-terminus, the 319-residue chain is Acetyl-coenzyme A carboxylase carboxyl transferase subunit alpha (319 aa).

One can recognise a CoA carboxyltransferase C-terminal domain in the interval 35 to 296 (NIDEEVHRLR…KAQLLADLAD (262 aa)).

The protein belongs to the AccA family. Acetyl-CoA carboxylase is a heterohexamer composed of biotin carboxyl carrier protein (AccB), biotin carboxylase (AccC) and two subunits each of ACCase subunit alpha (AccA) and ACCase subunit beta (AccD).

The protein resides in the cytoplasm. The catalysed reaction is N(6)-carboxybiotinyl-L-lysyl-[protein] + acetyl-CoA = N(6)-biotinyl-L-lysyl-[protein] + malonyl-CoA. It functions in the pathway lipid metabolism; malonyl-CoA biosynthesis; malonyl-CoA from acetyl-CoA: step 1/1. Functionally, component of the acetyl coenzyme A carboxylase (ACC) complex. First, biotin carboxylase catalyzes the carboxylation of biotin on its carrier protein (BCCP) and then the CO(2) group is transferred by the carboxyltransferase to acetyl-CoA to form malonyl-CoA. This is Acetyl-coenzyme A carboxylase carboxyl transferase subunit alpha from Shigella boydii serotype 4 (strain Sb227).